The sequence spans 319 residues: Acetyl esterase (319 aa).

The short motif at 91 to 93 (HGG) is the Involved in the stabilization of the negatively charged intermediate by the formation of the oxyanion hole element. Catalysis depends on residues Ser-165, Asp-262, and His-292.

The protein belongs to the 'GDXG' lipolytic enzyme family. Homodimer. Interacts with MalT and MelA.

It localises to the cytoplasm. In terms of biological role, displays esterase activity towards short chain fatty esters (acyl chain length of up to 8 carbons). Able to hydrolyze triacetylglycerol (triacetin) and tributyrylglycerol (tributyrin), but not trioleylglycerol (triolein) or cholesterol oleate. Negatively regulates MalT activity by antagonizing maltotriose binding. Inhibits MelA galactosidase activity. The sequence is that of Acetyl esterase from Escherichia coli O81 (strain ED1a).